A 201-amino-acid chain; its full sequence is Peptide deformylase (201 aa).

Fe cation is bound by residues Cys121 and His163. Glu164 is an active-site residue. Residue His167 coordinates Fe cation.

Belongs to the polypeptide deformylase family. Fe(2+) serves as cofactor.

It catalyses the reaction N-terminal N-formyl-L-methionyl-[peptide] + H2O = N-terminal L-methionyl-[peptide] + formate. Removes the formyl group from the N-terminal Met of newly synthesized proteins. Requires at least a dipeptide for an efficient rate of reaction. N-terminal L-methionine is a prerequisite for activity but the enzyme has broad specificity at other positions. The sequence is that of Peptide deformylase from Synechococcus sp. (strain CC9605).